We begin with the raw amino-acid sequence, 2253 residues long: Genome polyprotein (2253 aa).

Cysteine 627 and cysteine 694 form a disulfide bridge. Positions 750–752 match the Cell attachment site motif; it reads RVD. In terms of domain architecture, LRAT spans 825–920; it reads LVYKNRGFYK…LFPGRKEITQ (96 aa). Active-site for protein 2A H-NC residues include histidine 835 and histidine 846. Cysteine 904 (for protein 2A H-NC; Acyl-thioester intermediate) is an active-site residue. The helical transmembrane segment at 1002–1022 threads the bilayer; sequence IVLYCHAPNMLTTMCLGTLLV. The SF3 helicase domain occupies 1205–1366; sequence YSEMMRVNVR…ASYSRNNKLD (162 aa). Tyrosine 1559 carries the O-(5'-phospho-RNA)-tyrosine modification. The Peptidase C3 domain maps to 1586–1775; the sequence is APYMQDLEHC…RAAAVHFISN (190 aa). Catalysis depends on for protease 3C activity residues histidine 1626, aspartate 1664, and cysteine 1739. The active-site Acyl-thioester intermediate is the cysteine 1970. Positions 2018–2132 constitute a RdRp catalytic domain; sequence PYNYGLDYSS…SVSSPLDAEY (115 aa). Mg(2+)-binding residues include aspartate 2024 and aspartate 2118.

This sequence belongs to the picornaviruses polyprotein family. Interacts with capsid protein VP1 and capsid protein VP3 to form heterotrimeric protomers. Five protomers subsequently associate to form pentamers which serve as building blocks for the capsid. In terms of assembly, interacts with capsid protein VP0, and capsid protein VP3 to form heterotrimeric protomers. Five protomers subsequently associate to form pentamers which serve as building blocks for the capsid. As to quaternary structure, interacts with capsid protein VP0 and capsid protein VP1 to form heterotrimeric protomers. Five protomers subsequently associate to form pentamers which serve as building blocks for the capsid. Homohexamer; forms a hexameric ring structure with 6-fold symmetry characteristic of AAA+ ATPases. In terms of assembly, homodimer. Interacts with host ACBD3. As to quaternary structure, interacts with RNA-directed RNA polymerase. Interacts with Viral protein genome-linked. Mg(2+) serves as cofactor. VPg is uridylylated by the polymerase and is covalently linked to the 5'-end of genomic RNA. This uridylylated form acts as a nucleotide-peptide primer for the polymerase. Post-translationally, specific enzymatic cleavages yield mature proteins. All cleavages are catalyzed by P3C.

Its subcellular location is the virion. It localises to the host cytoplasm. It is found in the host nucleus. The protein localises to the host nucleolus. The protein resides in the host cytoplasmic vesicle membrane. Its subcellular location is the host endoplasmic reticulum membrane. It localises to the host Golgi apparatus membrane. The enzyme catalyses RNA(n) + a ribonucleoside 5'-triphosphate = RNA(n+1) + diphosphate. The catalysed reaction is a ribonucleoside 5'-triphosphate + H2O = a ribonucleoside 5'-diphosphate + phosphate + H(+). It carries out the reaction Selective cleavage of Gln-|-Gly bond in the poliovirus polyprotein. In other picornavirus reactions Glu may be substituted for Gln, and Ser or Thr for Gly.. Functionally, forms an icosahedral capsid of pseudo T=3 symmetry together with capsid proteins VP1 and VP3. The capsid is 300 Angstroms in diameter, composed of 60 copies of each capsid protein and enclosing the viral positive strand RNA genome. The attachment to the host cell receptor induces virion internalization predominantly through clathrin-mediated endocytosis. Binds packaging signals present in the viral RNA. Its function is as follows. Forms an icosahedral capsid of pseudo T=3 symmetry together with capsid proteins VP0 and VP1. The capsid is 300 Angstroms in diameter, composed of 60 copies of each capsid protein and enclosing the viral positive strand RNA genome. The attachment to the host cell receptor induces virion internalization predominantly through clathrin-mediated endocytosis. Binds packaging signals present in the viral RNA. Forms an icosahedral capsid of pseudo T=3 symmetry together with capsid proteins VP0 and VP3. The capsid is 300 Angstroms in diameter, composed of 60 copies of each capsid protein and enclosing the viral positive strand RNA genome. The attachment to the host cell receptor induces virion internalization predominantly through clathrin-mediated endocytosis. Binds packaging signals present in the viral RNA. In terms of biological role, mediates self-processing of the polyprotein by a translational effect termed 'ribosome skipping'. Mechanistically, 2A1-mediated cleavage occurs between the C-terminal glycine and the proline of the downstream protein 2A2. Functionally, plays an essential role in the virus replication cycle by acting as a viroporin. Creates a pore in the host endoplasmic reticulum and as a consequence releases Ca2+ in the cytoplasm of infected cell. In turn, high levels of cytoplasmic calcium may trigger membrane trafficking and transport of viral ER-associated proteins to viroplasms, sites of viral genome replication. Its function is as follows. Induces and associates with structural rearrangements of intracellular membranes. Displays RNA-binding, nucleotide binding and NTPase activities. May play a role in virion morphogenesis and viral RNA encapsidation by interacting with the capsid protein VP3. Localizes the viral replication complex to the surface of membranous vesicles. It inhibits host cell endoplasmic reticulum-to-Golgi apparatus transport and causes the disassembly of the Golgi complex, possibly through GBF1 interaction. This would result in depletion of MHC, trail receptors and IFN receptors at the host cell surface. Plays an essential role in viral RNA replication by recruiting ACBD3 and PI4KB at the viral replication sites, thereby allowing the formation of the rearranged membranous structures where viral replication takes place. In terms of biological role, acts as a primer for viral RNA replication and remains covalently bound to viral genomic RNA. VPg is uridylylated prior to priming replication into VPg-pUpU. The VPg-pUpU is then used as primer on the genomic RNA poly(A) by the RNA-dependent RNA polymerase to replicate the viral genome. Following genome release from the infecting virion in the cytoplasm, the VPg-RNA linkage is probably removed by host TDP2. During the late stage of the replication cycle, host TDP2 is excluded from sites of viral RNA synthesis and encapsidation, allowing for the generation of progeny virions. Functionally, cysteine protease that generates mature viral proteins from the precursor polyprotein. In addition to its proteolytic activity, it binds to viral RNA, and thus influences viral genome replication. RNA and substrate bind cooperatively to the protease. Its function is as follows. Replicates the viral genomic RNA on the surface of intracellular membranes. Covalently attaches UMP to a tyrosine of VPg, which is used to prime RNA synthesis. The positive stranded RNA genome is first replicated at virus induced membranous vesicles, creating a dsRNA genomic replication form. This dsRNA is then used as template to synthesize positive stranded RNA genomes. ss(+)RNA genomes are either translated, replicated or encapsidated. This chain is Genome polyprotein, found in Ljunganvirus 1 (LV).